Here is a 405-residue protein sequence, read N- to C-terminus: Endo-1,4-beta-xylanase 5 (405 aa).

The signal sequence occupies residues 1–22; sequence MTRLATLITLAGLLAVSPGAYA. Residues Asn27 and Asn69 are each glycosylated (N-linked (GlcNAc...) asparagine). The 321-residue stretch at 32-352 folds into the GH10 domain; sequence STGAEGLNSL…KPAYTSVSSL (321 aa). Glu166 acts as the Proton donor in catalysis. Asn171 is a glycosylation site (N-linked (GlcNAc...) asparagine). Glu273 serves as the catalytic Nucleophile. Cys302 and Cys308 are joined by a disulfide. The GPI-anchor amidated glycine moiety is linked to residue Gly380. Residues 381–405 constitute a propeptide, removed in mature form; sequence AGRETVSIAGLTLALSSLAFGMFML.

Belongs to the glycosyl hydrolase 10 (cellulase F) family.

It is found in the cell membrane. The protein localises to the secreted. The catalysed reaction is Endohydrolysis of (1-&gt;4)-beta-D-xylosidic linkages in xylans.. It participates in glycan degradation; xylan degradation. In terms of biological role, endo-1,4-beta-xylanase involved in the hydrolysis of xylan, a major structural heterogeneous polysaccharide found in plant biomass representing the second most abundant polysaccharide in the biosphere, after cellulose. This is Endo-1,4-beta-xylanase 5 (XYL5) from Pyricularia grisea (Crabgrass-specific blast fungus).